Here is a 149-residue protein sequence, read N- to C-terminus: Endoribonuclease YbeY (149 aa).

3 residues coordinate Zn(2+): histidine 112, histidine 116, and histidine 122.

Belongs to the endoribonuclease YbeY family. The cofactor is Zn(2+).

It localises to the cytoplasm. In terms of biological role, single strand-specific metallo-endoribonuclease involved in late-stage 70S ribosome quality control and in maturation of the 3' terminus of the 16S rRNA. This Methylibium petroleiphilum (strain ATCC BAA-1232 / LMG 22953 / PM1) protein is Endoribonuclease YbeY.